The chain runs to 168 residues: Small ribosomal subunit protein uS7c (168 aa).

The protein belongs to the universal ribosomal protein uS7 family. Part of the 30S ribosomal subunit.

It is found in the plastid. It localises to the chloroplast. Functionally, one of the primary rRNA binding proteins, it binds directly to 16S rRNA where it nucleates assembly of the head domain of the 30S subunit. This chain is Small ribosomal subunit protein uS7c (rps7), found in Chlamydomonas reinhardtii (Chlamydomonas smithii).